The following is a 147-amino-acid chain: uncharacterized protein (147 aa).

This is an uncharacterized protein from Acidianus filamentous virus 2 (isolate Italy/Pozzuoli) (AFV-2).